The chain runs to 843 residues: MSVGRLWSGLLLLLLFFCSRSSSCGLSTHVEIGHRALQFLQLQDGRINYKELLLEHQDAYQAGTVFPDAFYPSICKQGKFHEVSESTHWTPFLNASIHYIRENYPLPWEKDTEKLVAFLFGVTSHMVADVSWHSLGIEQGFLRTMGAIDFYDSYSEAHSAGDFGGDVLSQFEFNFNYLSRRWYVPIQDLLRIYDNLYGRKVITKNVIVDCTYLQFLEMHGEMLAVSKLYSTYSTKSPFLVEQFQDYFLGGLDDMAFWSTNIYRLTSFMLENGTSDCNLPENPLFISCDGRKNHTLSSSKVQKNDFHRNLTMFISKDIRKNLNYTERGVFYSTGSWAPESVTFMYQTLERNLRMMFTGNSQTALKHVSSPSASYTLSVPYARLGWVMASADLNQDGHGDLVVGAPGYSHPGRFQIGRVYIIYGNDLGLPPIDLDLDKEAHGVLEGFQPSGRFGSALAVLDFNKDGLPDLAVGAPSVGSGQLTYNGSVYVYYGSQQGRLSSSPNITISCKDTYCNLGWALLAADADGDGQHDLVISSPFAPGGGKQRGIVAAFYSHPRRNDKESLTLDEADWKVNGEEDFSWFGYSLHGVTVANRSLLLIGSPTWKNISRMARSSHQKNQEKKSLGRVYGYFPPNRQREITISGDKAMGKLGTSLSSGYVRVNGTLTQVLLVGAPTHDDVSKMAFLTMTLHHGGATRMYELAPEKTQPALFSTFSGDRRFSRFGSVLHLTDLDDDGLDEIIMAAPLRITDVTSGLLGEEDGRVYIYNGMHTTLGDVTGKCKSWMTPCPEEKAQYVLISPEASSRFGSSLVSVRSKERNQVVVAAGRSSWGARLSGALHVYSFSSD.

The N-terminal stretch at 1-23 (MSVGRLWSGLLLLLLFFCSRSSS) is a signal peptide. N-linked (GlcNAc...) asparagine glycosylation is found at Asn-94, Asn-271, Asn-292, Asn-308, and Asn-322. 7 FG-GAP repeats span residues 368–429 (SPSA…GLPP), 435–498 (DKEA…GRLS), 500–560 (SPNI…RNDK), 564–625 (TLDE…SLGR), 635–695 (QREI…GATR), 707–773 (ALFS…TLGD), and 791–843 (QYVL…FSSD). N-linked (GlcNAc...) asparagine glycosylation is found at Asn-483, Asn-502, Asn-592, Asn-605, and Asn-661.

Belongs to the GPLD1 family. As to quaternary structure, monomer. Post-translationally, glycosylated.

It is found in the secreted. The enzyme catalyses a 6-(alpha-D-glucosaminyl)-1-(1,2-diacyl-sn-glycero-3-phospho)-1D-myo-inositol + H2O = 6-(alpha-D-glucosaminyl)-1D-myo-inositol + a 1,2-diacyl-sn-glycero-3-phosphate + H(+). Its function is as follows. This protein hydrolyzes the inositol phosphate linkage in proteins anchored by phosphatidylinositol glycans (GPI-anchor) thus releasing these proteins from the membrane. The polypeptide is Phosphatidylinositol-glycan-specific phospholipase D (Gpld1) (Rattus norvegicus (Rat)).